The primary structure comprises 482 residues: Bifunctional protein GlmU (482 aa).

A pyrophosphorylase region spans residues 1–238 (MSAIRPAAVV…HREIAGINNR (238 aa)). UDP-N-acetyl-alpha-D-glucosamine contacts are provided by residues 12-15 (LAAG), K26, Q79, and 84-85 (GT). Mg(2+) is bound at residue D110. 4 residues coordinate UDP-N-acetyl-alpha-D-glucosamine: G147, E163, N178, and N236. Residue N236 coordinates Mg(2+). Positions 239–259 (VQLAEARRILNDRLLTRAMLA) are linker. The N-acetyltransferase stretch occupies residues 260–482 (GVTVVDPATT…VASRKPEGED (223 aa)). Residues R341 and K359 each contribute to the UDP-N-acetyl-alpha-D-glucosamine site. H371 functions as the Proton acceptor in the catalytic mechanism. UDP-N-acetyl-alpha-D-glucosamine-binding residues include Y374 and N385. Acetyl-CoA is bound by residues A388, 394–395 (NY), S413, A431, and R448.

This sequence in the N-terminal section; belongs to the N-acetylglucosamine-1-phosphate uridyltransferase family. It in the C-terminal section; belongs to the transferase hexapeptide repeat family. In terms of assembly, homotrimer. Mg(2+) serves as cofactor.

The protein localises to the cytoplasm. It catalyses the reaction alpha-D-glucosamine 1-phosphate + acetyl-CoA = N-acetyl-alpha-D-glucosamine 1-phosphate + CoA + H(+). It carries out the reaction N-acetyl-alpha-D-glucosamine 1-phosphate + UTP + H(+) = UDP-N-acetyl-alpha-D-glucosamine + diphosphate. The protein operates within nucleotide-sugar biosynthesis; UDP-N-acetyl-alpha-D-glucosamine biosynthesis; N-acetyl-alpha-D-glucosamine 1-phosphate from alpha-D-glucosamine 6-phosphate (route II): step 2/2. It participates in nucleotide-sugar biosynthesis; UDP-N-acetyl-alpha-D-glucosamine biosynthesis; UDP-N-acetyl-alpha-D-glucosamine from N-acetyl-alpha-D-glucosamine 1-phosphate: step 1/1. Its pathway is bacterial outer membrane biogenesis; LPS lipid A biosynthesis. Its function is as follows. Catalyzes the last two sequential reactions in the de novo biosynthetic pathway for UDP-N-acetylglucosamine (UDP-GlcNAc). The C-terminal domain catalyzes the transfer of acetyl group from acetyl coenzyme A to glucosamine-1-phosphate (GlcN-1-P) to produce N-acetylglucosamine-1-phosphate (GlcNAc-1-P), which is converted into UDP-GlcNAc by the transfer of uridine 5-monophosphate (from uridine 5-triphosphate), a reaction catalyzed by the N-terminal domain. This is Bifunctional protein GlmU from Streptomyces avermitilis (strain ATCC 31267 / DSM 46492 / JCM 5070 / NBRC 14893 / NCIMB 12804 / NRRL 8165 / MA-4680).